Here is a 111-residue protein sequence, read N- to C-terminus: Nucleoid-associated protein SynRCC307_0025 (111 aa).

Belongs to the YbaB/EbfC family. As to quaternary structure, homodimer.

It localises to the cytoplasm. The protein resides in the nucleoid. In terms of biological role, binds to DNA and alters its conformation. May be involved in regulation of gene expression, nucleoid organization and DNA protection. The protein is Nucleoid-associated protein SynRCC307_0025 of Synechococcus sp. (strain RCC307).